A 207-amino-acid chain; its full sequence is Succinyl-CoA:3-ketoacid coenzyme A transferase subunit B (207 aa).

E43 is an active-site residue.

It belongs to the 3-oxoacid CoA-transferase subunit B family. Heterodimer of a subunit A and a subunit B.

It catalyses the reaction a 3-oxo acid + succinyl-CoA = a 3-oxoacyl-CoA + succinate. This chain is Succinyl-CoA:3-ketoacid coenzyme A transferase subunit B (scoB), found in Helicobacter pylori (strain ATCC 700392 / 26695) (Campylobacter pylori).